The chain runs to 126 residues: MYLTLLKSKLHRACVTHIELEYEGSCAIDSVLLSTAGIQEYEQIHIYNLTNGERFVTYAIRAEDNSGIISVNGAAAHKACPGDRLIICTYAVFERSEMDSFKPLLIYLDDRNFITHTGNAIPVQVA.

Residue Ser-25 is the Schiff-base intermediate with substrate; via pyruvic acid of the active site. The residue at position 25 (Ser-25) is a Pyruvic acid (Ser). Substrate is bound at residue Thr-57. Residue Tyr-58 is the Proton donor of the active site. 73–75 (GAA) lines the substrate pocket.

It belongs to the PanD family. As to quaternary structure, heterooctamer of four alpha and four beta subunits. It depends on pyruvate as a cofactor. In terms of processing, is synthesized initially as an inactive proenzyme, which is activated by self-cleavage at a specific serine bond to produce a beta-subunit with a hydroxyl group at its C-terminus and an alpha-subunit with a pyruvoyl group at its N-terminus.

It localises to the cytoplasm. The catalysed reaction is L-aspartate + H(+) = beta-alanine + CO2. It participates in cofactor biosynthesis; (R)-pantothenate biosynthesis; beta-alanine from L-aspartate: step 1/1. Catalyzes the pyruvoyl-dependent decarboxylation of aspartate to produce beta-alanine. This Nitrosococcus oceani (strain ATCC 19707 / BCRC 17464 / JCM 30415 / NCIMB 11848 / C-107) protein is Aspartate 1-decarboxylase.